The sequence spans 133 residues: Nickel-responsive regulator (133 aa).

Residues histidine 76, histidine 87, histidine 89, and cysteine 95 each contribute to the Ni(2+) site.

The protein belongs to the transcriptional regulatory CopG/NikR family. In terms of assembly, homotetramer. It depends on Ni(2+) as a cofactor.

Its function is as follows. Transcriptional repressor of the nikABCDE operon. Is active in the presence of excessive concentrations of intracellular nickel. This chain is Nickel-responsive regulator, found in Salmonella arizonae (strain ATCC BAA-731 / CDC346-86 / RSK2980).